A 247-amino-acid polypeptide reads, in one-letter code: Probable transcriptional regulatory protein YebC (247 aa).

Residues Met-1–Lys-20 form a disordered region.

It belongs to the TACO1 family.

The protein resides in the cytoplasm. This is Probable transcriptional regulatory protein YebC from Salmonella arizonae (strain ATCC BAA-731 / CDC346-86 / RSK2980).